The primary structure comprises 629 residues: Probable potassium transport system protein Kup 3 (629 aa).

12 helical membrane-spanning segments follow: residues L20–F40, V54–V74, P106–T126, P143–I163, I171–A191, F212–T232, W253–L273, F291–I311, I343–F363, A372–L392, I400–A420, and F425–I445.

It belongs to the HAK/KUP transporter (TC 2.A.72) family.

The protein localises to the cell inner membrane. The enzyme catalyses K(+)(in) + H(+)(in) = K(+)(out) + H(+)(out). Functionally, transport of potassium into the cell. Likely operates as a K(+):H(+) symporter. This Legionella pneumophila (strain Corby) protein is Probable potassium transport system protein Kup 3.